The chain runs to 312 residues: uncharacterized protein (312 aa).

2 helical membrane-spanning segments follow: residues 4–24 (AIYL…TYAE) and 286–306 (YLLS…AIYL).

It localises to the cell membrane. This is an uncharacterized protein from Methanocaldococcus jannaschii (strain ATCC 43067 / DSM 2661 / JAL-1 / JCM 10045 / NBRC 100440) (Methanococcus jannaschii).